A 267-amino-acid polypeptide reads, in one-letter code: MNALLSNPFKEGLRKRDTQIGLWLSSTTSYMAEIAATSGYDWLLIDGEHAPNTVQDLYHQLQAIAPYASQPVIRPIEGSKALIKQVLDIGAQTLLIPMVDTAEQARQVVSATRYPPLGQRGVGASVARAARWGRIDNYMAQANESLCLLVQVESKVALENLDAILEVEGIDGVFIGPADLSASLGYPDNAGHPEVQRIIESCIYRIRAAGKAAGFLAVDPAMAQKCLAWGANFVAVGVDTMLYTEALDSRLAMFKSVQSVSTAKRSY.

Histidine 49 (proton acceptor) is an active-site residue. Glutamine 151 is a binding site for substrate. Glutamate 153 contacts Mg(2+). Positions 178 and 179 each coordinate substrate. Residue aspartate 179 participates in Mg(2+) binding.

Belongs to the HpcH/HpaI aldolase family. KDR aldolase subfamily. Homohexamer. Requires Mg(2+) as cofactor.

It catalyses the reaction 2-dehydro-3-deoxy-L-rhamnonate = (S)-lactaldehyde + pyruvate. In terms of biological role, catalyzes the reversible retro-aldol cleavage of 2-keto-3-deoxy-L-rhamnonate (KDR) to pyruvate and lactaldehyde. This Salmonella typhi protein is 2-keto-3-deoxy-L-rhamnonate aldolase.